A 120-amino-acid polypeptide reads, in one-letter code: Large ribosomal subunit protein uL18 (120 aa).

The protein belongs to the universal ribosomal protein uL18 family. In terms of assembly, part of the 50S ribosomal subunit; part of the 5S rRNA/L5/L18/L25 subcomplex. Contacts the 5S and 23S rRNAs.

In terms of biological role, this is one of the proteins that bind and probably mediate the attachment of the 5S RNA into the large ribosomal subunit, where it forms part of the central protuberance. The polypeptide is Large ribosomal subunit protein uL18 (Rhizobium meliloti (strain 1021) (Ensifer meliloti)).